A 530-amino-acid polypeptide reads, in one-letter code: Phosphoenolpyruvate carboxykinase (ATP) (530 aa).

Substrate-binding residues include arginine 58, tyrosine 195, and lysine 201. Residues lysine 201, histidine 220, and 236-244 (GLSGTGKTT) each bind ATP. Mn(2+) contacts are provided by lysine 201 and histidine 220. Mn(2+) is bound at residue aspartate 257. Residues glutamate 285, arginine 321, 440–441 (RI), and threonine 446 each bind ATP. Position 321 (arginine 321) interacts with substrate.

The protein belongs to the phosphoenolpyruvate carboxykinase (ATP) family. Mn(2+) serves as cofactor.

It is found in the cytoplasm. It catalyses the reaction oxaloacetate + ATP = phosphoenolpyruvate + ADP + CO2. The protein operates within carbohydrate biosynthesis; gluconeogenesis. Functionally, involved in the gluconeogenesis. Catalyzes the conversion of oxaloacetate (OAA) to phosphoenolpyruvate (PEP) through direct phosphoryl transfer between the nucleoside triphosphate and OAA. The protein is Phosphoenolpyruvate carboxykinase (ATP) of Staphylococcus aureus (strain MSSA476).